Here is a 211-residue protein sequence, read N- to C-terminus: MPNLLHVDASLAQEGSTSRSLAATYIDAWRAAHPDGTVTYRDLALTPPPHLDWATLSAAFTPPEQHTPEQTEGVKLREELIGELEAADELLLSLPMYNYSVPSTFKAWVDQVILVGRTLQQPPAESVLTGDRVTVIATQGGSYGVGTPKEGWDHQLPFIAHVLESLGATDVELVRVEMTLAPVNPALADFTDVYERSRAAGESALRARAAA.

FMN-binding positions include Ser10, Ser16–Ser18, and Thr138–Gly141.

This sequence belongs to the azoreductase type 1 family. In terms of assembly, homodimer. Requires FMN as cofactor.

It carries out the reaction 2 a quinone + NADH + H(+) = 2 a 1,4-benzosemiquinone + NAD(+). The enzyme catalyses N,N-dimethyl-1,4-phenylenediamine + anthranilate + 2 NAD(+) = 2-(4-dimethylaminophenyl)diazenylbenzoate + 2 NADH + 2 H(+). Functionally, quinone reductase that provides resistance to thiol-specific stress caused by electrophilic quinones. Its function is as follows. Also exhibits azoreductase activity. Catalyzes the reductive cleavage of the azo bond in aromatic azo compounds to the corresponding amines. The polypeptide is FMN-dependent NADH:quinone oxidoreductase (Frankia alni (strain DSM 45986 / CECT 9034 / ACN14a)).